The primary structure comprises 301 residues: Probable alpha-L-glutamate ligase (301 aa).

The ATP-grasp domain occupies 104-287 (LQLLSRRGIG…VAGIIIEHIE (184 aa)). ATP is bound by residues Lys141, 178–179 (EY), Asp187, and 211–213 (RSN). 3 residues coordinate Mg(2+): Asp248, Glu260, and Asn262. Residues Asp248, Glu260, and Asn262 each coordinate Mn(2+).

The protein belongs to the RimK family. Mg(2+) is required as a cofactor. It depends on Mn(2+) as a cofactor.

This Pseudomonas fluorescens (strain ATCC BAA-477 / NRRL B-23932 / Pf-5) protein is Probable alpha-L-glutamate ligase.